A 94-amino-acid chain; its full sequence is ESAT-6-like protein EsxN (94 aa).

This sequence belongs to the WXG100 family. ESAT-6 subfamily.

It is found in the secreted. The protein is ESAT-6-like protein EsxN of Mycobacterium bovis (strain ATCC BAA-935 / AF2122/97).